The following is an 882-amino-acid chain: Putative HTH-type transcriptional regulator Rv0890c (882 aa).

One can recognise an HTH luxR-type domain in the interval 814–879 (PARGWGSLTP…QLVDEAARRG (66 aa)). The H-T-H motif DNA-binding region spans 838-857 (NKDIAKRLFVSPRTVQTHLT).

This is Putative HTH-type transcriptional regulator Rv0890c from Mycobacterium tuberculosis (strain ATCC 25618 / H37Rv).